The following is a 138-amino-acid chain: Large ribosomal subunit protein uL16 (138 aa).

Over residues 1–16 (MLIPRRVKHRKQHHPG) the composition is skewed to basic residues. The disordered stretch occupies residues 1–25 (MLIPRRVKHRKQHHPGRSGQATGGT).

This sequence belongs to the universal ribosomal protein uL16 family. Part of the 50S ribosomal subunit.

Binds 23S rRNA and is also seen to make contacts with the A and possibly P site tRNAs. The protein is Large ribosomal subunit protein uL16 of Renibacterium salmoninarum (strain ATCC 33209 / DSM 20767 / JCM 11484 / NBRC 15589 / NCIMB 2235).